Consider the following 316-residue polypeptide: Protein PXR1 (316 aa).

Residues 25–71 (TSRFGHQYLERMGWKPGKGLGLVEHATTSHVKVSIKDDNLGLGSKLA) form the G-patch domain. The tract at residues 146-280 (GTTKKRKIDS…DSMLMPKEQL (135 aa)) is disordered. Basic and acidic residues predominate over residues 179–195 (DRKEKEEKKTEKENSEI). Positions 196-209 (KKKKKEKKEKKEKK) are enriched in basic residues. The span at 210–240 (EKKDKNEKKEKKDKNEKKEKKDKNEEKEKKE) shows a compositional bias: basic and acidic residues. Basic residues predominate over residues 241–260 (KKEKKEKKDKKDKKDKKDKK). Residues 261-270 (EKKEVKEVTR) are compositionally biased toward basic and acidic residues.

It belongs to the PINX1 family.

Its subcellular location is the nucleus. It is found in the nucleolus. Functionally, involved in rRNA-processing at A0, A1 and A2 sites and negatively regulates telomerase. This chain is Protein PXR1 (PXR1), found in Debaryomyces hansenii (strain ATCC 36239 / CBS 767 / BCRC 21394 / JCM 1990 / NBRC 0083 / IGC 2968) (Yeast).